A 120-amino-acid chain; its full sequence is Ribosome-binding factor A (120 aa).

It belongs to the RbfA family. In terms of assembly, monomer. Binds 30S ribosomal subunits, but not 50S ribosomal subunits or 70S ribosomes.

It localises to the cytoplasm. In terms of biological role, one of several proteins that assist in the late maturation steps of the functional core of the 30S ribosomal subunit. Associates with free 30S ribosomal subunits (but not with 30S subunits that are part of 70S ribosomes or polysomes). Required for efficient processing of 16S rRNA. May interact with the 5'-terminal helix region of 16S rRNA. This is Ribosome-binding factor A from Campylobacter jejuni subsp. jejuni serotype O:6 (strain 81116 / NCTC 11828).